The sequence spans 647 residues: 1-deoxy-D-xylulose-5-phosphate synthase (647 aa).

Thiamine diphosphate is bound by residues His72 and 113–115 (GHA). Asp144 contacts Mg(2+). Thiamine diphosphate is bound by residues 145–146 (GA), Asn174, Tyr287, and Glu370. Residue Asn174 participates in Mg(2+) binding.

Belongs to the transketolase family. DXPS subfamily. Homodimer. It depends on Mg(2+) as a cofactor. Thiamine diphosphate serves as cofactor.

It catalyses the reaction D-glyceraldehyde 3-phosphate + pyruvate + H(+) = 1-deoxy-D-xylulose 5-phosphate + CO2. The protein operates within metabolic intermediate biosynthesis; 1-deoxy-D-xylulose 5-phosphate biosynthesis; 1-deoxy-D-xylulose 5-phosphate from D-glyceraldehyde 3-phosphate and pyruvate: step 1/1. Its function is as follows. Catalyzes the acyloin condensation reaction between C atoms 2 and 3 of pyruvate and glyceraldehyde 3-phosphate to yield 1-deoxy-D-xylulose-5-phosphate (DXP). The sequence is that of 1-deoxy-D-xylulose-5-phosphate synthase from Synechococcus sp. (strain WH7803).